Reading from the N-terminus, the 372-residue chain is 3 beta-hydroxysteroid dehydrogenase/Delta 5--&gt;4-isomerase type 2 (372 aa).

Tyrosine 154 serves as the catalytic Proton acceptor. An NAD(+)-binding site is contributed by lysine 158. A helical transmembrane segment spans residues 287–307; the sequence is LTLMYWIGFLLEVVSFLLSPI.

Belongs to the 3-beta-HSD family. In terms of tissue distribution, expressed in adrenal gland, testis and ovary.

The protein localises to the endoplasmic reticulum membrane. Its subcellular location is the mitochondrion membrane. It carries out the reaction a 3beta-hydroxy-Delta(5)-steroid + NAD(+) = a 3-oxo-Delta(5)-steroid + NADH + H(+). It catalyses the reaction a 3-oxo-Delta(5)-steroid = a 3-oxo-Delta(4)-steroid. The catalysed reaction is pregnenolone + NAD(+) = pregn-5-ene-3,20-dione + NADH + H(+). The enzyme catalyses pregn-5-ene-3,20-dione = progesterone. It carries out the reaction 3beta-hydroxyandrost-5-en-17-one + NAD(+) = androst-5-ene-3,17-dione + NADH + H(+). It catalyses the reaction androst-5-ene-3,17-dione = androst-4-ene-3,17-dione. The protein operates within lipid metabolism; steroid biosynthesis. In terms of biological role, 3-beta-HSD is a bifunctional enzyme, that catalyzes the oxidative conversion of Delta(5)-ene-3-beta-hydroxy steroid, and the oxidative conversion of ketosteroids. The 3-beta-HSD enzymatic system plays a crucial role in the biosynthesis of all classes of hormonal steroids. The protein is 3 beta-hydroxysteroid dehydrogenase/Delta 5--&gt;4-isomerase type 2 of Homo sapiens (Human).